A 307-amino-acid polypeptide reads, in one-letter code: Protease HtpX homolog (307 aa).

The next 2 membrane-spanning stretches (helical) occupy residues 7–27 (AILLAGLTGLFMGVGYLIGGA) and 28–48 (SGATIALVVAAATNLFAYWNS). H130 lines the Zn(2+) pocket. E131 is an active-site residue. H134 contacts Zn(2+). 2 helical membrane-spanning segments follow: residues 145–165 (ITATIAGAISMLAQFGMFFGG) and 171–191 (GPGIIGSLAMMILAPFGAMLV). Position 200 (E200) interacts with Zn(2+). Positions 277–307 (AGQSGGGLAPGGPPPDPSSPWNKGSRRGPWG) are disordered.

The protein belongs to the peptidase M48B family. Zn(2+) is required as a cofactor.

It localises to the cell inner membrane. The sequence is that of Protease HtpX homolog from Nitrobacter winogradskyi (strain ATCC 25391 / DSM 10237 / CIP 104748 / NCIMB 11846 / Nb-255).